Consider the following 492-residue polypeptide: Glycogen synthase 1 (492 aa).

Lys-15 contacts ADP-alpha-D-glucose.

The protein belongs to the glycosyltransferase 1 family. Bacterial/plant glycogen synthase subfamily.

The enzyme catalyses [(1-&gt;4)-alpha-D-glucosyl](n) + ADP-alpha-D-glucose = [(1-&gt;4)-alpha-D-glucosyl](n+1) + ADP + H(+). It participates in glycan biosynthesis; glycogen biosynthesis. Synthesizes alpha-1,4-glucan chains using ADP-glucose. This chain is Glycogen synthase 1, found in Trichormus variabilis (strain ATCC 29413 / PCC 7937) (Anabaena variabilis).